The following is a 192-amino-acid chain: 7-methyl-GTP pyrophosphatase (192 aa).

Catalysis depends on D69, which acts as the Proton acceptor.

This sequence belongs to the Maf family. YceF subfamily. Requires a divalent metal cation as cofactor.

It is found in the cytoplasm. It carries out the reaction N(7)-methyl-GTP + H2O = N(7)-methyl-GMP + diphosphate + H(+). Nucleoside triphosphate pyrophosphatase that hydrolyzes 7-methyl-GTP (m(7)GTP). May have a dual role in cell division arrest and in preventing the incorporation of modified nucleotides into cellular nucleic acids. The sequence is that of 7-methyl-GTP pyrophosphatase from Pseudomonas aeruginosa (strain ATCC 15692 / DSM 22644 / CIP 104116 / JCM 14847 / LMG 12228 / 1C / PRS 101 / PAO1).